The sequence spans 444 residues: Methylenetetrahydrofolate--tRNA-(uracil-5-)-methyltransferase TrmFO (444 aa).

Position 10 to 15 (Gly-10 to Gly-15) interacts with FAD.

The protein belongs to the MnmG family. TrmFO subfamily. It depends on FAD as a cofactor.

The protein localises to the cytoplasm. The catalysed reaction is uridine(54) in tRNA + (6R)-5,10-methylene-5,6,7,8-tetrahydrofolate + NADH + H(+) = 5-methyluridine(54) in tRNA + (6S)-5,6,7,8-tetrahydrofolate + NAD(+). It carries out the reaction uridine(54) in tRNA + (6R)-5,10-methylene-5,6,7,8-tetrahydrofolate + NADPH + H(+) = 5-methyluridine(54) in tRNA + (6S)-5,6,7,8-tetrahydrofolate + NADP(+). Functionally, catalyzes the folate-dependent formation of 5-methyl-uridine at position 54 (M-5-U54) in all tRNAs. The protein is Methylenetetrahydrofolate--tRNA-(uracil-5-)-methyltransferase TrmFO of Streptococcus uberis (strain ATCC BAA-854 / 0140J).